The primary structure comprises 430 residues: Histidine--tRNA ligase, chloroplastic (430 aa).

This sequence belongs to the class-II aminoacyl-tRNA synthetase family.

The protein resides in the plastid. Its subcellular location is the chloroplast. It carries out the reaction tRNA(His) + L-histidine + ATP = L-histidyl-tRNA(His) + AMP + diphosphate + H(+). The sequence is that of Histidine--tRNA ligase, chloroplastic from Pyropia yezoensis (Susabi-nori).